Reading from the N-terminus, the 250-residue chain is Homeobox protein DLL-1 (250 aa).

Disordered stretches follow at residues 40–66 (YPSLHCLHSGSHHHPQHQHDTNYSGSN) and 84–106 (SPYLQSCNSNTTTQSRAEEPDQQ). The span at 84–98 (SPYLQSCNSNTTTQS) shows a compositional bias: polar residues. The segment at residues 125-184 (IRKPRTIYSSLQLQALNHRFQQTQYLALPERAELAASLGVTQTQVKIWFQNKRSKYKKLI) is a DNA-binding region (homeobox).

Belongs to the distal-less homeobox family.

The protein resides in the nucleus. This chain is Homeobox protein DLL-1 (dll1), found in Xenopus laevis (African clawed frog).